A 227-amino-acid polypeptide reads, in one-letter code: PKHD-type hydroxylase BamMC406_5004 (227 aa).

The 100-residue stretch at 80 to 179 (QVYPPLFNRY…RVASFFWVQS (100 aa)) folds into the Fe2OG dioxygenase domain. Histidine 98, aspartate 100, and histidine 160 together coordinate Fe cation. A 2-oxoglutarate-binding site is contributed by arginine 170.

It depends on Fe(2+) as a cofactor. L-ascorbate serves as cofactor.

This Burkholderia ambifaria (strain MC40-6) protein is PKHD-type hydroxylase BamMC406_5004.